Consider the following 618-residue polypeptide: Sphingomyelin phosphodiesterase 2 (618 aa).

A signal peptide spans 1 to 22 (MQQPLIILGIGIVLALVSNVES). The Saposin B-type domain maps to 68-151 (RKMSCLFCTF…AFIANCGHSD (84 aa)). Cystine bridges form between Cys72–Cys147, Cys75–Cys140, and Cys103–Cys114. A glycan (N-linked (GlcNAc...) asparagine) is linked at Asn89. N-linked (GlcNAc...) asparagine glycosylation occurs at Asn159. Zn(2+) contacts are provided by Asp189 and His191. Cystine bridges form between Cys204/Cys216 and Cys217/Cys249. Residue Asp278 coordinates Zn(2+). The N-linked (GlcNAc...) asparagine glycan is linked to Asn298. Asn318, His427, His461, and His463 together coordinate Zn(2+). Cysteines 387 and 435 form a disulfide. N-linked (GlcNAc...) asparagine glycans are attached at residues Asn525 and Asn568. 2 cysteine pairs are disulfide-bonded: Cys588–Cys594 and Cys600–Cys613.

Belongs to the acid sphingomyelinase family. It depends on Zn(2+) as a cofactor.

Its subcellular location is the secreted. The enzyme catalyses a sphingomyelin + H2O = phosphocholine + an N-acylsphing-4-enine + H(+). The catalysed reaction is an N-acyl-15-methylhexadecasphing-4-enine-1-phosphocholine + H2O = an N-acyl-15-methylhexadecasphing-4-enine + phosphocholine + H(+). Its pathway is lipid metabolism; sphingolipid metabolism. Functionally, sphingomyelin phosphodiesterase (sphingomyelinase) that converts sphingomyelin (N-acyl-sphingoid-1-phosphocholine) to ceramide (N-acyl-sphingoid base) and phosphocholine at acidic pH. Displays its enzymatic activity when secreted. May play distinct roles in signaling. The protein is Sphingomyelin phosphodiesterase 2 (asm-2) of Caenorhabditis elegans.